Reading from the N-terminus, the 373-residue chain is Glutamine synthetase (373 aa).

Ala2 carries the N-acetylalanine modification. Positions Ala2 to Lys25 are required for glutamine-induced ubiquitination by CRL4(CRBN) and proteasomal degradation. An N6-acetyllysine mark is found at Lys11 and Lys14. The region spanning Glu24–Arg106 is the GS beta-grasp domain. Residue Tyr104 is modified to Phosphotyrosine. In terms of domain architecture, GS catalytic spans Leu113–Asn373. Glu134 contacts ATP. Mn(2+)-binding residues include Glu134, Glu136, Glu196, and Glu203. Glu203 to Pro208 contacts ATP. An L-glutamate-binding site is contributed by Asn246–Trp247. His253 provides a ligand contact to Mn(2+). Residues Asn255–Ser257, Arg319, and Arg324 each bind ATP. Arg319 provides a ligand contact to L-glutamate. Tyr336–Glu338 contacts ADP. Glu338 is a binding site for Mn(2+). Arg340 contributes to the L-glutamate binding site. Ser343 bears the Phosphoserine mark.

The protein belongs to the glutamine synthetase family. Decamer; composed of two pentamers. Interacts with PALMD. Interacts with RHOJ. Interacts with BEST2; this interaction tethers a fraction of GLUL to the membrane, causing a decrease of cytosolic glutamine synthase (GS) activity and inhibits the chloride channel activity of BEST2 by affecting the gating at the aperture in the absence of intracellular glutamate. Mg(2+) is required as a cofactor. Mn(2+) serves as cofactor. Post-translationally, palmitoylated; undergoes autopalmitoylation. In terms of processing, acetylated by EP300/p300; acetylation is stimulated by increased glutamine levels and promotes ubiquitin-mediated proteasomal degradation. Ubiquitinated by ZNRF1. Ubiquitinated by the DCX (DDB1-CUL4-X-box) E3 ubiquitin-protein ligase complex called CRL4(CRBN), leading to proteasomal degradation.

It is found in the cytoplasm. It localises to the cytosol. The protein resides in the microsome. Its subcellular location is the mitochondrion. The protein localises to the cell membrane. It catalyses the reaction L-glutamate + NH4(+) + ATP = L-glutamine + ADP + phosphate + H(+). The enzyme catalyses L-cysteinyl-[protein] + hexadecanoyl-CoA = S-hexadecanoyl-L-cysteinyl-[protein] + CoA. Glutamine synthetase activity is inhibited by methionine sulfoximine (MSO). Its function is as follows. Glutamine synthetase that catalyzes the ATP-dependent conversion of glutamate and ammonia to glutamine. Its role depends on tissue localization: in the brain, it regulates the levels of toxic ammonia and converts neurotoxic glutamate to harmless glutamine, whereas in the liver, it is one of the enzymes responsible for the removal of ammonia. Plays a key role in ammonium detoxification during erythropoiesis: the glutamine synthetase activity is required to remove ammonium generated by porphobilinogen deaminase (HMBS) during heme biosynthesis to prevent ammonium accumulation and oxidative stress. Essential for proliferation of fetal skin fibroblasts. Independently of its glutamine synthetase activity, required for endothelial cell migration during vascular development. Involved in angiogenesis by regulating membrane localization and activation of the GTPase RHOJ, possibly by promoting RHOJ palmitoylation. May act as a palmitoyltransferase for RHOJ: able to autopalmitoylate and then transfer the palmitoyl group to RHOJ. Plays a role in ribosomal 40S subunit biogenesis. Through the interaction with BEST2, inhibits BEST2 channel activity by affecting the gating at the aperture in the absence of intracellular L-glutamate, but sensitizes BEST2 to intracellular L-glutamate, which promotes the opening of BEST2 and thus relieves its inhibitory effect on BEST2. The sequence is that of Glutamine synthetase from Sus scrofa (Pig).